Here is a 561-residue protein sequence, read N- to C-terminus: MIFYDKLKPADVLVIGSADGRVIEAIEYIADLHKQHGFKFAICLGNLFSHKRTTSADVVKLKNEKVKVPIPVYFGVGTAGLPESIISHMAMYGPEVAPNLFCMGICGFMKTFYKFTIAQLGGSYNEEKYYQPPEKFEQSLNEKCFHRSDVQKLSKRCDILFSSEWPEDVQENSTLPERKLPKGCMPLAALAANCMPQYFFVPGPVYYEREPYKNSAAINVNTGTVTHFVALAPFKNSKNEKFSYAFTLYPLTTEYMQPAPPNCTASPFEHRPIPLKRASEDQIIPQQTNKFHKSKSSTALFKSKKDSSSSLNKMHKSESHSALNNLHKSESGTSLNNRRSKVGPGSCFFCLSNPNVALHLIVAIGNEAYMALPKGPLTTTASNTPALASSGHVLIIPIAHASALSTLSDTSYEKTLNEMNRFRKAVTDMYNACDSDALVYEISRANGVHLHWQMIPIPKISSHRIESVFLEMAKEAGYDFEERDVEPHELNYFRVFLPSGKILIHRLQLRERFDLQFGRRAAAKILGLEDRVDWRKCVQTEDEEKAESEAFKMCFKPYDFT.

The interval Gln286 to Arg338 is disordered. The residue at position 296 (Ser296) is a Phosphoserine. The residue at position 298 (Thr298) is a Phosphothreonine. 4 positions are modified to phosphoserine: Ser317, Ser319, Ser331, and Ser334. Residues His320–Asn337 are compositionally biased toward polar residues.

Belongs to the CWF19 family.

It localises to the nucleus. Functionally, has a role in meiosis. This Schizosaccharomyces pombe (strain 972 / ATCC 24843) (Fission yeast) protein is CWF19-like protein mug161 (mug161).